Reading from the N-terminus, the 83-residue chain is U5-theraphotoxin-Hs1a 6 (83 aa).

Positions Met1–Ala21 are cleaved as a signal peptide. A propeptide spanning residues Ser22–Arg49 is cleaved from the precursor. 3 disulfides stabilise this stretch: Cys51–Cys63, Cys56–Cys68, and Cys62–Cys75.

It belongs to the neurotoxin 10 (Hwtx-1) family. 51 (Hntx-8) subfamily. Hntx-8 sub-subfamily. Expressed by the venom gland.

It is found in the secreted. Agglutinates erythrocytes. The protein is U5-theraphotoxin-Hs1a 6 of Cyriopagopus schmidti (Chinese bird spider).